Here is a 79-residue protein sequence, read N- to C-terminus: Translational regulator CsrA (79 aa).

The protein belongs to the CsrA/RsmA family. As to quaternary structure, homodimer; the beta-strands of each monomer intercalate to form a hydrophobic core, while the alpha-helices form wings that extend away from the core.

It is found in the cytoplasm. Its function is as follows. A translational regulator that binds mRNA to regulate translation initiation and/or mRNA stability. Usually binds in the 5'-UTR at or near the Shine-Dalgarno sequence preventing ribosome-binding, thus repressing translation. Its main target seems to be the major flagellin gene, while its function is anatagonized by FliW. This chain is Translational regulator CsrA, found in Geotalea uraniireducens (strain Rf4) (Geobacter uraniireducens).